The following is a 70-amino-acid chain: DNA-directed RNA polymerase subunit omega (70 aa).

This sequence belongs to the RNA polymerase subunit omega family. In terms of assembly, the RNAP catalytic core consists of 2 alpha, 1 beta, 1 beta' and 1 omega subunit. When a sigma factor is associated with the core the holoenzyme is formed, which can initiate transcription.

The catalysed reaction is RNA(n) + a ribonucleoside 5'-triphosphate = RNA(n+1) + diphosphate. Functionally, promotes RNA polymerase assembly. Latches the N- and C-terminal regions of the beta' subunit thereby facilitating its interaction with the beta and alpha subunits. In Staphylococcus epidermidis (strain ATCC 12228 / FDA PCI 1200), this protein is DNA-directed RNA polymerase subunit omega.